Reading from the N-terminus, the 311-residue chain is tRNA-cytidine(32) 2-sulfurtransferase (311 aa).

The disordered stretch occupies residues 18–38; that stretch reads KVGADHGPSEENGSSHPLFDN. A PP-loop motif motif is present at residues 77–82; the sequence is SGGKDS. Residues C152, C155, and C243 each contribute to the [4Fe-4S] cluster site.

This sequence belongs to the TtcA family. Homodimer. It depends on Mg(2+) as a cofactor. The cofactor is [4Fe-4S] cluster.

The protein resides in the cytoplasm. It catalyses the reaction cytidine(32) in tRNA + S-sulfanyl-L-cysteinyl-[cysteine desulfurase] + AH2 + ATP = 2-thiocytidine(32) in tRNA + L-cysteinyl-[cysteine desulfurase] + A + AMP + diphosphate + H(+). It participates in tRNA modification. Its function is as follows. Catalyzes the ATP-dependent 2-thiolation of cytidine in position 32 of tRNA, to form 2-thiocytidine (s(2)C32). The sulfur atoms are provided by the cysteine/cysteine desulfurase (IscS) system. This chain is tRNA-cytidine(32) 2-sulfurtransferase, found in Agrobacterium fabrum (strain C58 / ATCC 33970) (Agrobacterium tumefaciens (strain C58)).